Reading from the N-terminus, the 117-residue chain is Large ribosomal subunit protein bL17 (117 aa).

It belongs to the bacterial ribosomal protein bL17 family. Part of the 50S ribosomal subunit. Contacts protein L32.

This chain is Large ribosomal subunit protein bL17, found in Campylobacter lari (strain RM2100 / D67 / ATCC BAA-1060).